The sequence spans 378 residues: Glutamate 5-kinase (378 aa).

An ATP-binding site is contributed by K20. Substrate is bound by residues S60, D147, and N159. ATP-binding positions include 179 to 180 and 221 to 227; these read TD and TGGMLTK. Positions 286–364 constitute a PUA domain; that stretch reads RGRVVLDAGA…SQIARILGSM (79 aa).

Belongs to the glutamate 5-kinase family.

The protein localises to the cytoplasm. It catalyses the reaction L-glutamate + ATP = L-glutamyl 5-phosphate + ADP. It functions in the pathway amino-acid biosynthesis; L-proline biosynthesis; L-glutamate 5-semialdehyde from L-glutamate: step 1/2. Catalyzes the transfer of a phosphate group to glutamate to form L-glutamate 5-phosphate. This chain is Glutamate 5-kinase, found in Bordetella petrii (strain ATCC BAA-461 / DSM 12804 / CCUG 43448).